We begin with the raw amino-acid sequence, 473 residues long: Aspartyl/glutamyl-tRNA(Asn/Gln) amidotransferase subunit B (473 aa).

The protein belongs to the GatB/GatE family. GatB subfamily. In terms of assembly, heterotrimer of A, B and C subunits.

The catalysed reaction is L-glutamyl-tRNA(Gln) + L-glutamine + ATP + H2O = L-glutaminyl-tRNA(Gln) + L-glutamate + ADP + phosphate + H(+). It carries out the reaction L-aspartyl-tRNA(Asn) + L-glutamine + ATP + H2O = L-asparaginyl-tRNA(Asn) + L-glutamate + ADP + phosphate + 2 H(+). Allows the formation of correctly charged Asn-tRNA(Asn) or Gln-tRNA(Gln) through the transamidation of misacylated Asp-tRNA(Asn) or Glu-tRNA(Gln) in organisms which lack either or both of asparaginyl-tRNA or glutaminyl-tRNA synthetases. The reaction takes place in the presence of glutamine and ATP through an activated phospho-Asp-tRNA(Asn) or phospho-Glu-tRNA(Gln). The protein is Aspartyl/glutamyl-tRNA(Asn/Gln) amidotransferase subunit B of Wolbachia sp. subsp. Drosophila simulans (strain wRi).